Reading from the N-terminus, the 250-residue chain is MNKKEKRIVAIAAAFALCFGISPAVNAMHIMEGYLPPKYCITWGILSIPFLVAGYFSIKKTVSKQHRSITMLAMAGAFVFVLSSLKIPSVTGSCSHMTGTGLGAILFGPSAVSILGIIVLIFQAILLAHGGLTTLGANTFSMAIAGPFVSFGIYKLCQKLKVNKLSGIFLAAFVGDLFTYCVTSIQLALAYPSSNGGVGASALKFLAVFAPTQVPLAIIEGILTVVIMIGLETYAKAELNDLGLVNGGIN.

Positions 1–26 (MNKKEKRIVAIAAAFALCFGISPAVN) are cleaved as a signal peptide. Helical transmembrane passes span 38–58 (KYCITWGILSIPFLVAGYFSI), 68–88 (SITMLAMAGAFVFVLSSLKIP), 102–122 (LGAILFGPSAVSILGIIVLIF), 134–154 (TLGANTFSMAIAGPFVSFGIY), 165–185 (LSGIFLAAFVGDLFTYCVTSI), and 209–229 (FAPTQVPLAIIEGILTVVIMI).

Belongs to the CbiM family. Forms an energy-coupling factor (ECF) transporter complex composed of an ATP-binding protein (A component, CbiO), a transmembrane protein (T component, CbiQ) and 2 possible substrate-capture proteins (S components, CbiM and CbiN) of unknown stoichimetry.

The protein resides in the cell membrane. It functions in the pathway cofactor biosynthesis; adenosylcobalamin biosynthesis. Part of the energy-coupling factor (ECF) transporter complex CbiMNOQ involved in cobalt import. The sequence is that of Cobalt transport protein CbiM from Lachnoclostridium phytofermentans (strain ATCC 700394 / DSM 18823 / ISDg) (Clostridium phytofermentans).